A 1066-amino-acid polypeptide reads, in one-letter code: Allene oxide synthase-lipoxygenase protein (1066 aa).

Positions 1–371 (MTWKNFGFEI…LKIGSLVPAG (371 aa)) are allene oxide synthase. Residue Tyr353 coordinates heme. The segment at 372 to 1066 (QNAIYNVEVE…PERIPNGTAI (695 aa)) is arachidonate 8-lipoxygenase. Residues 374–490 (AIYNVEVETG…KDMVLFPGEA (117 aa)) form the PLAT domain. Ca(2+) is bound by residues His387, Gly389, Thr390, Asp391, Asn416, Asp417, Glu419, Asp452, and Asp454. The 576-residue stretch at 491 to 1066 (TLPFNEVPAI…PERIPNGTAI (576 aa)) folds into the Lipoxygenase domain. 5 residues coordinate Fe cation: His757, His762, His943, Asn947, and Ile1066.

The protein in the C-terminal section; belongs to the lipoxygenase family. As to quaternary structure, dimer. It depends on Ca(2+) as a cofactor. Fe cation is required as a cofactor. The cofactor is heme.

It localises to the cytoplasm. It is found in the membrane. The catalysed reaction is (5Z,8Z,11Z,14Z)-eicosatetraenoate + O2 = (8R)-hydroperoxy-(5Z,9E,11Z,14Z)-eicosatetraenoate. It carries out the reaction (8R)-hydroperoxy-(5Z,9E,11Z,14Z)-eicosatetraenoate = 8,9-epoxy-(5Z,9E,11Z,14Z)-eicosatetraenoate + H2O. The enzyme catalyses (5Z,8Z,11Z,14Z,17Z)-eicosapentaenoate + O2 = (8R)-hydroperoxy-(5Z,9E,11Z,14Z,17Z)-eicosapentaenoate. It catalyses the reaction (4Z,7Z,10Z,13Z,16Z,19Z)-docosahexaenoate + O2 = 10-hydroperoxy-(4Z,7Z,11E,13Z,16Z,19Z)-docosahexaenoate. The catalysed reaction is (8Z,11Z,14Z)-eicosatrienoate + O2 = (8R)-hydroperoxy-(9E,11Z,14Z)-eicosatrienoate. It carries out the reaction (8Z,11Z,14Z)-eicosatrienoate + O2 = 10-hydroperoxy-(8Z,11Z,14Z)-eicosatrienoate. The enzyme catalyses (8Z,11Z,14Z)-eicosatrienoate + O2 = 11-hydroperoxy-(8Z,12E,14Z)-eicosatrienoate. It participates in lipid metabolism; arachidonate metabolism. It functions in the pathway lipid metabolism; fatty acid metabolism. Lipoxygenase activity is stimulated by calcium, sodium, lithium and potassium ions. Calcium binding promotes interaction with membranes and thus facilitates access to substrates. Bifunctional enzyme which is responsible for allene oxide biosynthesis via a two-step reaction; first the lipoxygenase reaction that converts polyunsaturated fatty acids such as arachidonate ((5Z,8Z,11Z,14Z)-eicosatetraenoate) into a (8R)-hydroperoxide intermediate ((8R)-hydroperoxy-(5Z,9E,11Z,14Z)-eicosatetraenoate) followed by the allene oxide synthase reaction that converts the hydroperoxide intermediate ((8R)-hydroperoxy-(5Z,9E,11Z,14Z)-eicosatetraenoate) into the allene oxide (8,9-epoxy-(5Z,9E,11Z,14Z)-eicosatetraenoate). Shows preference for C20 or C22 highly polyunsaturated fatty acids and no activity with C18 fatty acids in vitro. Fatty acid allene oxides are intermediates in the formation of cyclopentenones or hydrolytic products in marine systems, most notably the prostanoid-related clavulones. The sequence is that of Allene oxide synthase-lipoxygenase protein from Plexaura homomalla (Black sea rod).